Reading from the N-terminus, the 327-residue chain is tRNA-dihydrouridine(20/20a) synthase (327 aa).

FMN is bound by residues 17–19 and Q69; that span reads PML. C99 (proton donor) is an active-site residue. FMN-binding positions include K138, H170, 210-212, and 232-233; these read NGG and GR.

The protein belongs to the Dus family. DusA subfamily. FMN serves as cofactor.

It catalyses the reaction 5,6-dihydrouridine(20) in tRNA + NADP(+) = uridine(20) in tRNA + NADPH + H(+). The catalysed reaction is 5,6-dihydrouridine(20) in tRNA + NAD(+) = uridine(20) in tRNA + NADH + H(+). It carries out the reaction 5,6-dihydrouridine(20a) in tRNA + NADP(+) = uridine(20a) in tRNA + NADPH + H(+). The enzyme catalyses 5,6-dihydrouridine(20a) in tRNA + NAD(+) = uridine(20a) in tRNA + NADH + H(+). Its function is as follows. Catalyzes the synthesis of 5,6-dihydrouridine (D), a modified base found in the D-loop of most tRNAs, via the reduction of the C5-C6 double bond in target uridines. Specifically modifies U20 and U20a in tRNAs. The chain is tRNA-dihydrouridine(20/20a) synthase from Pasteurella multocida (strain Pm70).